Consider the following 549-residue polypeptide: Oxygen-dependent choline dehydrogenase (549 aa).

4–33 (DFVIIGSGSAGSAMAYRLSEDGRYSVIVIE) is a binding site for FAD. Residue histidine 465 is the Proton acceptor of the active site.

This sequence belongs to the GMC oxidoreductase family. It depends on FAD as a cofactor.

The enzyme catalyses choline + A = betaine aldehyde + AH2. The catalysed reaction is betaine aldehyde + NAD(+) + H2O = glycine betaine + NADH + 2 H(+). The protein operates within amine and polyamine biosynthesis; betaine biosynthesis via choline pathway; betaine aldehyde from choline (cytochrome c reductase route): step 1/1. Its function is as follows. Involved in the biosynthesis of the osmoprotectant glycine betaine. Catalyzes the oxidation of choline to betaine aldehyde and betaine aldehyde to glycine betaine at the same rate. This Brucella anthropi (strain ATCC 49188 / DSM 6882 / CCUG 24695 / JCM 21032 / LMG 3331 / NBRC 15819 / NCTC 12168 / Alc 37) (Ochrobactrum anthropi) protein is Oxygen-dependent choline dehydrogenase.